The chain runs to 173 residues: Interferon gamma (173 aa).

The first 22 residues, 1–22, serve as a signal peptide directing secretion; it reads MNATHCILALQLCLLAISGCSS. Residue Gln23 is modified to Pyrrolidone carboxylic acid. N-linked (GlcNAc...) asparagine glycosylation is found at Asn38 and Asn105.

The protein belongs to the type II (or gamma) interferon family. As to quaternary structure, homodimer. Interacts with IFNGR1 (via extracellular domain); this interaction promotes IFNGR1 dimerization. As to expression, released primarily from activated T lymphocytes.

The protein resides in the secreted. Its function is as follows. Type II interferon produced by immune cells such as T-cells and NK cells that plays crucial roles in antimicrobial, antiviral, and antitumor responses by activating effector immune cells and enhancing antigen presentation. Primarily signals through the JAK-STAT pathway after interaction with its receptor IFNGR1 to affect gene regulation. Upon IFNG binding, IFNGR1 intracellular domain opens out to allow association of downstream signaling components JAK2, JAK1 and STAT1, leading to STAT1 activation, nuclear translocation and transcription of IFNG-regulated genes. Many of the induced genes are transcription factors such as IRF1 that are able to further drive regulation of a next wave of transcription. Plays a role in class I antigen presentation pathway by inducing a replacement of catalytic proteasome subunits with immunoproteasome subunits. In turn, increases the quantity, quality, and repertoire of peptides for class I MHC loading. Increases the efficiency of peptide generation also by inducing the expression of activator PA28 that associates with the proteasome and alters its proteolytic cleavage preference. Up-regulates as well MHC II complexes on the cell surface by promoting expression of several key molecules such as cathepsins B/CTSB, H/CTSH, and L/CTSL. Participates in the regulation of hematopoietic stem cells during development and under homeostatic conditions by affecting their development, quiescence, and differentiation. This Meriones unguiculatus (Mongolian jird) protein is Interferon gamma (IFNG).